Here is a 723-residue protein sequence, read N- to C-terminus: Protein Aster-A (723 aa).

Over residues 1-18 (MFDTTPHSGRSSPSSSPS) the composition is skewed to low complexity. A disordered region spans residues 1 to 63 (MFDTTPHSGR…SGVSGTLSTQ (63 aa)). Residues 28 to 38 (PSRPPSAPEPE) are compositionally biased toward pro residues. A GRAM domain is found at 93 to 160 (EDFRKLFSKL…KEVTCLKKEK (68 aa)). The disordered stretch occupies residues 257–337 (SPSGAADRSQ…DGPTSNLGPL (81 aa)). Phosphoserine is present on residues Ser-265, Ser-269, and Ser-273. Polar residues predominate over residues 302–314 (DSQLDASSSQTVT). In terms of domain architecture, VASt spans 370–541 (SGRLLINSVF…ELAKAEKVSL (172 aa)). Residue Ser-418 is modified to Phosphoserine. The tract at residues 562–601 (LSWRGHRDGPQHPDPDPCTQTSMHTSGSLSSRFSEPSVDQ) is disordered. The segment covering 566-576 (GHRDGPQHPDP) has biased composition (basic and acidic residues). Positions 579–595 (CTQTSMHTSGSLSSRFS) are enriched in polar residues. A helical transmembrane segment spans residues 610-630 (ALVLISIVLIVLIALNALLFY).

It is found in the endoplasmic reticulum membrane. The protein localises to the cell membrane. The protein resides in the cytoplasmic vesicle. It localises to the autophagosome. Its function is as follows. Cholesterol transporter that mediates non-vesicular transport of cholesterol from the plasma membrane (PM) to the endoplasmic reticulum (ER). Contains unique domains for binding cholesterol and the PM, thereby serving as a molecular bridge for the transfer of cholesterol from the PM to the ER. Plays a crucial role in cholesterol homeostasis and has the unique ability to localize to the PM based on the level of membrane cholesterol. In lipid-poor conditions localizes to the ER membrane and in response to excess cholesterol in the PM is recruited to the endoplasmic reticulum-plasma membrane contact sites (EPCS) which is mediated by the GRAM domain. At the EPCS, the sterol-binding VASt/ASTER domain binds to the cholesterol in the PM and facilitates its transfer from the PM to ER. May play a role in tumor progression. Plays a role in autophagy regulation and is required for biogenesis of the autophagosome. This function in autophagy requires its cholesterol-transfer activity. This chain is Protein Aster-A, found in Rattus norvegicus (Rat).